The following is a 353-amino-acid chain: Farnesyl pyrophosphate synthase (353 aa).

Residues Lys-57, Arg-60, and Gln-96 each coordinate isopentenyl diphosphate. Lys-57 is modified (N6-(2-hydroxyisobutyryl)lysine; alternate). The residue at position 57 (Lys-57) is an N6-acetyllysine; alternate. Residues Asp-103 and Asp-107 each contribute to the Mg(2+) site. Arg-112 contacts dimethylallyl diphosphate. Position 113 (Arg-113) interacts with isopentenyl diphosphate. The dimethylallyl diphosphate site is built by Lys-200, Thr-201, Gln-240, Lys-257, and Lys-266.

This sequence belongs to the FPP/GGPP synthase family. In terms of assembly, homodimer. Interacts with RSAD2. Mg(2+) serves as cofactor. As to expression, testis, liver, kidney, brain and adrenal gland.

It localises to the cytoplasm. The catalysed reaction is isopentenyl diphosphate + dimethylallyl diphosphate = (2E)-geranyl diphosphate + diphosphate. It catalyses the reaction isopentenyl diphosphate + (2E)-geranyl diphosphate = (2E,6E)-farnesyl diphosphate + diphosphate. The protein operates within isoprenoid biosynthesis; farnesyl diphosphate biosynthesis; farnesyl diphosphate from geranyl diphosphate and isopentenyl diphosphate: step 1/1. It functions in the pathway isoprenoid biosynthesis; geranyl diphosphate biosynthesis; geranyl diphosphate from dimethylallyl diphosphate and isopentenyl diphosphate: step 1/1. Inactivated by interferon-induced RSAD2. This inactivation may result of disruption of lipid rafts at the plasma membrane, and thus have an antiviral effect since many enveloped viruses need lipid rafts to bud efficiently out of the cell. Its function is as follows. Key enzyme in isoprenoid biosynthesis which catalyzes the formation of farnesyl diphosphate (FPP), a precursor for several classes of essential metabolites including sterols, dolichols, carotenoids, and ubiquinones. FPP also serves as substrate for protein farnesylation and geranylgeranylation. Catalyzes the sequential condensation of isopentenyl pyrophosphate with the allylic pyrophosphates, dimethylallyl pyrophosphate, and then with the resultant geranylpyrophosphate to the ultimate product farnesyl pyrophosphate. This Rattus norvegicus (Rat) protein is Farnesyl pyrophosphate synthase (Fdps).